The following is a 442-amino-acid chain: Methylenetetrahydrofolate--tRNA-(uracil-5-)-methyltransferase TrmFO 1 (442 aa).

9–14 serves as a coordination point for FAD; that stretch reads GAGLAG.

Belongs to the MnmG family. TrmFO subfamily. The cofactor is FAD.

Its subcellular location is the cytoplasm. The enzyme catalyses uridine(54) in tRNA + (6R)-5,10-methylene-5,6,7,8-tetrahydrofolate + NADH + H(+) = 5-methyluridine(54) in tRNA + (6S)-5,6,7,8-tetrahydrofolate + NAD(+). The catalysed reaction is uridine(54) in tRNA + (6R)-5,10-methylene-5,6,7,8-tetrahydrofolate + NADPH + H(+) = 5-methyluridine(54) in tRNA + (6S)-5,6,7,8-tetrahydrofolate + NADP(+). Catalyzes the folate-dependent formation of 5-methyl-uridine at position 54 (M-5-U54) in all tRNAs. The sequence is that of Methylenetetrahydrofolate--tRNA-(uracil-5-)-methyltransferase TrmFO 1 from Mesoplasma florum (strain ATCC 33453 / NBRC 100688 / NCTC 11704 / L1) (Acholeplasma florum).